The sequence spans 197 residues: Nucleoid occlusion factor SlmA (197 aa).

The HTH tetR-type domain occupies I7–L67. The segment at residues T30–F49 is a DNA-binding region (H-T-H motif).

Belongs to the nucleoid occlusion factor SlmA family. In terms of assembly, homodimer. Interacts with FtsZ.

It is found in the cytoplasm. The protein resides in the nucleoid. Functionally, required for nucleoid occlusion (NO) phenomenon, which prevents Z-ring formation and cell division over the nucleoid. Acts as a DNA-associated cell division inhibitor that binds simultaneously chromosomal DNA and FtsZ, and disrupts the assembly of FtsZ polymers. SlmA-DNA-binding sequences (SBS) are dispersed on non-Ter regions of the chromosome, preventing FtsZ polymerization at these regions. This chain is Nucleoid occlusion factor SlmA, found in Shewanella oneidensis (strain ATCC 700550 / JCM 31522 / CIP 106686 / LMG 19005 / NCIMB 14063 / MR-1).